The chain runs to 1435 residues: Guanine nucleotide exchange factor LTE1 (1435 aa).

The N-terminal Ras-GEF domain occupies Val25–Trp157. Residues Lys235–Asn256 are disordered. Over residues Gln237–Ser249 the composition is skewed to low complexity. Ser271 carries the post-translational modification Phosphoserine. Residues Gln338–Ser365 are disordered. Position 559 is a phosphoserine (Ser559). Basic and acidic residues predominate over residues Lys582 to Asn606. Residues Lys582 to Ser689 form a disordered region. Residues Ser621–Leu632 show a composition bias toward polar residues. The segment covering Ser654 to Ser667 has biased composition (low complexity). Ser689 is subject to Phosphoserine. Position 691 is a phosphothreonine (Thr691). A compositionally biased stretch (basic and acidic residues) spans Glu723–Asn744. The tract at residues Glu723–Asp747 is disordered. Residues Ser808 and Ser810 each carry the phosphoserine modification. Residues Ala851–Ser871 form a disordered region. A phosphoserine mark is found at Ser1028 and Ser1109. The 241-residue stretch at Asp1194–Ser1434 folds into the Ras-GEF domain.

This sequence belongs to the LTE1 family. In terms of assembly, interacts with CDC24, CDC42, KEL1, KEL2, RAS2 and TEM1. Phosphorylated by CDC28 in a cell cycle-dependent manner and in response to nocodazole. Dephosphorylion by CDC14 triggers LTE1 release from bud cortex during the exit of mitosis.

The protein localises to the cytoplasm. Its subcellular location is the bud. GDP-GTP exchange factor for TEM1, a Ras-like protein, component of the mitotic exit network (MEN). Activation of TEM1 by LTE1 in the bud ultimately leads to activation of CDC15 followed by the release of CDC14 from the nucleolus, which then inactivates cyclin-dependent kinases (CDKs) activity by several mechanism. Required for TEM1 localization to the bud cortex during mitotic exit. Fine-tunes the timing of the mitotic exit and couples this event with cytokinesis. Its function is as follows. Involved in proprotein-processing like proalpha factor-processing in the secretory pathway. This Saccharomyces cerevisiae (strain ATCC 204508 / S288c) (Baker's yeast) protein is Guanine nucleotide exchange factor LTE1 (LTE1).